The sequence spans 156 residues: Ribonuclease 7 (156 aa).

The first 28 residues, 1-28 (MAPARAGFCPLLLLLLLGLWVAEIPVSA), serve as a signal peptide directing secretion. The important for antibacterial activity stretch occupies residues 29–32 (KPKG). H43 acts as the Proton acceptor in catalysis. DUMP-binding residues include H43, K66, N69, and T70. Cystine bridges form between C51/C109, C65/C119, C83/C134, and C90/C97. Residue N127 is glycosylated (N-linked (GlcNAc...) asparagine). The interval 139–140 (KK) is important for antibacterial activity. DUMP-binding residues include H151 and R154. H151 (proton donor) is an active-site residue.

Expressed in collecting ducts in kidney, and in apical uroepithelium in bladder (at protein level). Expressed in various epithelial tissues including skin, respiratory tract, genito-urinary tract and, at a low level, in the gut. Expressed in liver, kidney, skeletal muscle and heart.

It localises to the secreted. Exhibits a potent RNase activity. Has broad-spectrum antimicrobial activity against many pathogenic microorganisms including uropathogenic E.coli (UPEC), and remarkably potent activity (lethal dose of 90% &lt; 30 nM) against a vancomycin resistant Enterococcus faecium. Causes loss of bacterial membrane integrity. Probably contributes to urinary tract sterility. Bactericidal activity is independent of RNase activity. The sequence is that of Ribonuclease 7 (RNASE7) from Homo sapiens (Human).